Consider the following 379-residue polypeptide: Dual-specificity RNA methyltransferase RlmN (379 aa).

The Proton acceptor role is filled by E90. The Radical SAM core domain maps to 96–348; that stretch reads EPNRGTLCVS…TTVRKTRGDD (253 aa). C103 and C353 form a disulfide bridge. C110, C114, and C117 together coordinate [4Fe-4S] cluster. S-adenosyl-L-methionine-binding positions include 179–180, S211, 233–235, and N310; these read GE and SLH. Residue C353 is the S-methylcysteine intermediate of the active site.

It belongs to the radical SAM superfamily. RlmN family. [4Fe-4S] cluster serves as cofactor.

The protein localises to the cytoplasm. It carries out the reaction adenosine(2503) in 23S rRNA + 2 reduced [2Fe-2S]-[ferredoxin] + 2 S-adenosyl-L-methionine = 2-methyladenosine(2503) in 23S rRNA + 5'-deoxyadenosine + L-methionine + 2 oxidized [2Fe-2S]-[ferredoxin] + S-adenosyl-L-homocysteine. The enzyme catalyses adenosine(37) in tRNA + 2 reduced [2Fe-2S]-[ferredoxin] + 2 S-adenosyl-L-methionine = 2-methyladenosine(37) in tRNA + 5'-deoxyadenosine + L-methionine + 2 oxidized [2Fe-2S]-[ferredoxin] + S-adenosyl-L-homocysteine. Functionally, specifically methylates position 2 of adenine 2503 in 23S rRNA and position 2 of adenine 37 in tRNAs. m2A2503 modification seems to play a crucial role in the proofreading step occurring at the peptidyl transferase center and thus would serve to optimize ribosomal fidelity. The chain is Dual-specificity RNA methyltransferase RlmN from Nitrosomonas eutropha (strain DSM 101675 / C91 / Nm57).